Here is a 423-residue protein sequence, read N- to C-terminus: MKNPEKPLLLFLILASSLASMATAKSTIEPCSSKDTCNSLLGYTLYTDLKVTEVASLFQVDPVSMLLSNSIDISYPDVENHVLPAKLFLKIPITCSCVDGIRKSLSTHYKTRTSDTLGSIADSVYGGLVSPEQIQVANSETDLSVLDVGTKLVIPLPCACFNGTDESLPALYLSYVVRGIDTMAGIAKRFSTSVTDLTNVNAMGAPDINPGDILAVPLLACSSNFPKYATDYGLIIPNGSYALTAGHCVQCSCVLGSRSMYCEPASISVSCSSMRCRNSNFMLGNITSQQSSSGCKLTTCSYNGFASGTILTTLSMSLQPRCPGPQQLAPLIAPPDNVPKELMYLPSPSPSPSPEFDDIAGGGSSIAAVPAASPGGATVSSSNSIPGNPANGPGGSISIASCPLSYYSFIALLIPIGSCFFVF.

A signal peptide spans 1–24 (MKNPEKPLLLFLILASSLASMATA). Cystine bridges form between Cys-31/Cys-97, Cys-37/Cys-160, Cys-95/Cys-158, and Cys-97/Cys-160. The LysM 1 domain maps to 107–154 (THYKTRTSDTLGSIADSVYGGLVSPEQIQVANSETDLSVLDVGTKLVI). A glycan (N-linked (GlcNAc...) asparagine) is linked at Asn-162. Positions 173-216 (LSYVVRGIDTMAGIAKRFSTSVTDLTNVNAMGAPDINPGDILAV) constitute a LysM 2 domain. Intrachain disulfides connect Cys-221–Cys-253 and Cys-248–Cys-276. An N-linked (GlcNAc...) asparagine glycan is attached at Asn-238. N-linked (GlcNAc...) asparagine glycosylation occurs at Asn-285. The GPI-anchor amidated glycine moiety is linked to residue Gly-394. Residues 395–423 (GSISIASCPLSYYSFIALLIPIGSCFFVF) constitute a propeptide, removed in mature form.

As to quaternary structure, interacts with peptidoglycans.

The protein resides in the cell membrane. Required as a cell surface receptor for peptidoglycan (PGN) elicitor signaling leading to innate immunity. Plays an essential role in detecting PGNs and restricting bacterial growth (of Pseudomonas syringae pv. tomato DC3000 for example). This is LysM domain-containing GPI-anchored protein 3 (LYM3) from Arabidopsis thaliana (Mouse-ear cress).